A 377-amino-acid chain; its full sequence is PqqA peptide cyclase (377 aa).

The region spanning 12-228 is the Radical SAM core domain; it reads FGIPLAVLLE…EAARERLKGQ (217 aa). The [4Fe-4S] cluster site is built by Cys26, Cys30, and Cys33.

It belongs to the radical SAM superfamily. PqqE family. In terms of assembly, interacts with PqqD. The interaction is necessary for activity of PqqE. [4Fe-4S] cluster serves as cofactor.

It carries out the reaction [PQQ precursor protein] + S-adenosyl-L-methionine = E-Y cross-linked-[PQQ precursor protein] + 5'-deoxyadenosine + L-methionine + H(+). It functions in the pathway cofactor biosynthesis; pyrroloquinoline quinone biosynthesis. Functionally, catalyzes the cross-linking of a glutamate residue and a tyrosine residue in the PqqA protein as part of the biosynthesis of pyrroloquinoline quinone (PQQ). The polypeptide is PqqA peptide cyclase (Rhodopseudomonas palustris (strain ATCC BAA-98 / CGA009)).